The primary structure comprises 345 residues: Centromere protein L (345 aa).

Serine 40 and serine 54 each carry phosphoserine.

It belongs to the CENP-L/IML3 family. Component of the CENPA-CAD complex, composed of CENPI, CENPK, CENPL, CENPO, CENPP, CENPQ, CENPR and CENPS. The CENPA-CAD complex interacts with the CENPA-NAC complex, at least composed of CENPA, CENPC, CENPH, CENPM, CENPN, CENPT and CENPU.

It localises to the nucleus. It is found in the chromosome. Its subcellular location is the centromere. Component of the CENPA-CAD (nucleosome distal) complex, a complex recruited to centromeres which is involved in assembly of kinetochore proteins, mitotic progression and chromosome segregation. May be involved in incorporation of newly synthesized CENPA into centromeres via its interaction with the CENPA-NAC complex. The chain is Centromere protein L (Cenpl) from Rattus norvegicus (Rat).